Consider the following 262-residue polypeptide: Ornithine carbamoyltransferase (262 aa).

Carbamoyl phosphate-binding positions include 3–7, Gln30, Arg54, and 81–84; these read STRTR and HPTQ. L-ornithine-binding positions include Asn114, Asp178, and 182-183; that span reads SM. Residues 219 to 222 and Thr247 contribute to the carbamoyl phosphate site; that span reads HCLP.

This sequence belongs to the aspartate/ornithine carbamoyltransferase superfamily. OTCase family.

The protein resides in the cytoplasm. It catalyses the reaction carbamoyl phosphate + L-ornithine = L-citrulline + phosphate + H(+). The protein operates within amino-acid biosynthesis; L-arginine biosynthesis; L-arginine from L-ornithine and carbamoyl phosphate: step 1/3. In terms of biological role, reversibly catalyzes the transfer of the carbamoyl group from carbamoyl phosphate (CP) to the N(epsilon) atom of ornithine (ORN) to produce L-citrulline. The protein is Ornithine carbamoyltransferase (argF) of Neisseria lactamica.